Consider the following 315-residue polypeptide: Prephenate dehydratase (315 aa).

Positions 7 to 190 (VVAYLGPAGT…ARTRFVAVQA (184 aa)) constitute a Prephenate dehydratase domain. The ACT domain occupies 204-283 (SVIFSLPNVP…LVFVGSWPSN (80 aa)).

It catalyses the reaction prephenate + H(+) = 3-phenylpyruvate + CO2 + H2O. The protein operates within amino-acid biosynthesis; L-phenylalanine biosynthesis; phenylpyruvate from prephenate: step 1/1. The polypeptide is Prephenate dehydratase (pheA) (Corynebacterium glutamicum (strain ATCC 13032 / DSM 20300 / JCM 1318 / BCRC 11384 / CCUG 27702 / LMG 3730 / NBRC 12168 / NCIMB 10025 / NRRL B-2784 / 534)).